A 356-amino-acid chain; its full sequence is Histidinol-phosphate aminotransferase (356 aa).

K222 carries the post-translational modification N6-(pyridoxal phosphate)lysine.

The protein belongs to the class-II pyridoxal-phosphate-dependent aminotransferase family. Histidinol-phosphate aminotransferase subfamily. As to quaternary structure, homodimer. Pyridoxal 5'-phosphate serves as cofactor.

The enzyme catalyses L-histidinol phosphate + 2-oxoglutarate = 3-(imidazol-4-yl)-2-oxopropyl phosphate + L-glutamate. It participates in amino-acid biosynthesis; L-histidine biosynthesis; L-histidine from 5-phospho-alpha-D-ribose 1-diphosphate: step 7/9. This chain is Histidinol-phosphate aminotransferase, found in Lactiplantibacillus plantarum (strain ATCC BAA-793 / NCIMB 8826 / WCFS1) (Lactobacillus plantarum).